The following is a 62-amino-acid chain: Large ribosomal subunit protein bL33 (62 aa).

The protein belongs to the bacterial ribosomal protein bL33 family.

The polypeptide is Large ribosomal subunit protein bL33 (Azobacteroides pseudotrichonymphae genomovar. CFP2).